A 105-amino-acid polypeptide reads, in one-letter code: Cysteine-rich venom protein VAR2 (105 aa).

An N-terminal signal peptide occupies residues 1–22; the sequence is MILLKLYLTLAAILCQSRGTTS.

This sequence belongs to the CRISP family. Contains 8 disulfide bonds. Expressed by the venom gland.

It is found in the secreted. Blocks ryanodine receptors, and potassium channels. The chain is Cysteine-rich venom protein VAR2 from Varanus acanthurus (Ridge-tailed monitor).